Consider the following 305-residue polypeptide: Ubiquinone biosynthesis protein COQ4 homolog, mitochondrial (305 aa).

Zn(2+) is bound by residues histidine 150, aspartate 151, histidine 154, and glutamate 166.

This sequence belongs to the COQ4 family. Component of a multi-subunit COQ enzyme complex. Requires Zn(2+) as cofactor.

The protein localises to the mitochondrion inner membrane. It carries out the reaction a 4-hydroxy-3-methoxy-5-(all-trans-polyprenyl)benzoate + H(+) = a 2-methoxy-6-(all-trans-polyprenyl)phenol + CO2. It participates in cofactor biosynthesis; ubiquinone biosynthesis. Functionally, lyase that catalyzes the C1-decarboxylation of 4-hydroxy-3-methoxy-5-(all-trans-polyprenyl)benzoic acid into 2-methoxy-6-(all-trans-polyprenyl)phenol during ubiquinone biosynthesis. The protein is Ubiquinone biosynthesis protein COQ4 homolog, mitochondrial of Cryptosporidium parvum (strain Iowa II).